Reading from the N-terminus, the 299-residue chain is tRNA pseudouridine synthase B (299 aa).

The active-site Nucleophile is the Asp-49. Positions 241 to 299 constitute a PUA domain; that stretch reads MPRVTVSGRAAARVLHGVAPAVRVEHPDGTTVAVVAANGALLALAEADGGGLRLRKVFG.

It belongs to the pseudouridine synthase TruB family. Type 1 subfamily.

It carries out the reaction uridine(55) in tRNA = pseudouridine(55) in tRNA. Its function is as follows. Responsible for synthesis of pseudouridine from uracil-55 in the psi GC loop of transfer RNAs. The polypeptide is tRNA pseudouridine synthase B (Symbiobacterium thermophilum (strain DSM 24528 / JCM 14929 / IAM 14863 / T)).